The chain runs to 160 residues: Transcription elongation factor GreA (160 aa).

Residues 2–30 adopt a coiled-coil conformation; the sequence is SEKTYPMTLAEKEQLEQELEELKLVRRPE.

This sequence belongs to the GreA/GreB family.

Its function is as follows. Necessary for efficient RNA polymerase transcription elongation past template-encoded arresting sites. The arresting sites in DNA have the property of trapping a certain fraction of elongating RNA polymerases that pass through, resulting in locked ternary complexes. Cleavage of the nascent transcript by cleavage factors such as GreA or GreB allows the resumption of elongation from the new 3'terminus. GreA releases sequences of 2 to 3 nucleotides. This Streptococcus mutans serotype c (strain ATCC 700610 / UA159) protein is Transcription elongation factor GreA.